Consider the following 84-residue polypeptide: Large ribosomal subunit protein bL27 (84 aa).

The disordered stretch occupies residues 1–21 (MAHKKGGGSTKNGRDSNPQYL).

This sequence belongs to the bacterial ribosomal protein bL27 family.

In Chloroherpeton thalassium (strain ATCC 35110 / GB-78), this protein is Large ribosomal subunit protein bL27.